Reading from the N-terminus, the 379-residue chain is Cytochrome b (379 aa).

4 consecutive transmembrane segments (helical) span residues 33–53 (FGSL…FLAM), 77–98 (WLIR…FIHV), 113–133 (WNIG…GYVL), and 178–198 (FFAF…VHLL). 2 residues coordinate heme b: His-83 and His-97. Residues His-182 and His-196 each coordinate heme b. His-201 is an a ubiquinone binding site. 4 consecutive transmembrane segments (helical) span residues 226–246 (IKDL…ALFF), 288–308 (LGGV…PLLN), 320–340 (VTQT…WIGG), and 347–367 (FTMI…ILIP).

The protein belongs to the cytochrome b family. The cytochrome bc1 complex contains 11 subunits: 3 respiratory subunits (MT-CYB, CYC1 and UQCRFS1), 2 core proteins (UQCRC1 and UQCRC2) and 6 low-molecular weight proteins (UQCRH/QCR6, UQCRB/QCR7, UQCRQ/QCR8, UQCR10/QCR9, UQCR11/QCR10 and a cleavage product of UQCRFS1). This cytochrome bc1 complex then forms a dimer. Heme b is required as a cofactor.

It is found in the mitochondrion inner membrane. Its function is as follows. Component of the ubiquinol-cytochrome c reductase complex (complex III or cytochrome b-c1 complex) that is part of the mitochondrial respiratory chain. The b-c1 complex mediates electron transfer from ubiquinol to cytochrome c. Contributes to the generation of a proton gradient across the mitochondrial membrane that is then used for ATP synthesis. The polypeptide is Cytochrome b (MT-CYB) (Akodon philipmyersi (Myers' grass mouse)).